The sequence spans 320 residues: Glucokinase (320 aa).

It belongs to the ROK (NagC/XylR) family. As to quaternary structure, monomer. Requires a divalent metal cation as cofactor.

It carries out the reaction D-glucose + ATP = D-glucose 6-phosphate + ADP + H(+). Functionally, catalyzes the phosphorylation of D-glucose to D-glucose 6-phosphate using ATP as the phosphate donor. ITP can also serve as an effective phosphoryl donor. According to Hansen et al., the enzyme has a broad hexose specificity, and in addition to glucose, which shows the highest catalytic efficiency, it can also phosphorylate fructose, mannose, glucosamine, N-acetylglucosamine, N-acetylmannosamine and 2-deoxyglucose. However, according to Sakuraba et al., the enzyme shows strict specificity for D-glucose. This is Glucokinase from Aeropyrum pernix (strain ATCC 700893 / DSM 11879 / JCM 9820 / NBRC 100138 / K1).